The following is a 354-amino-acid chain: Phosphate acyltransferase (354 aa).

This sequence belongs to the PlsX family. Homodimer. Probably interacts with PlsY.

It is found in the cytoplasm. It carries out the reaction a fatty acyl-[ACP] + phosphate = an acyl phosphate + holo-[ACP]. The protein operates within lipid metabolism; phospholipid metabolism. Functionally, catalyzes the reversible formation of acyl-phosphate (acyl-PO(4)) from acyl-[acyl-carrier-protein] (acyl-ACP). This enzyme utilizes acyl-ACP as fatty acyl donor, but not acyl-CoA. The protein is Phosphate acyltransferase of Ralstonia nicotianae (strain ATCC BAA-1114 / GMI1000) (Ralstonia solanacearum).